The following is a 210-amino-acid chain: dITP/XTP pyrophosphatase (210 aa).

Position 16–21 (16–21 (SNNKGK)) interacts with substrate. Catalysis depends on D79, which acts as the Proton acceptor. D79 lines the Mg(2+) pocket. Residues S80, 166-169 (FGYD), K189, and 194-195 (HR) contribute to the substrate site.

It belongs to the HAM1 NTPase family. As to quaternary structure, homodimer. Mg(2+) serves as cofactor.

It catalyses the reaction XTP + H2O = XMP + diphosphate + H(+). It carries out the reaction dITP + H2O = dIMP + diphosphate + H(+). The enzyme catalyses ITP + H2O = IMP + diphosphate + H(+). Functionally, pyrophosphatase that catalyzes the hydrolysis of nucleoside triphosphates to their monophosphate derivatives, with a high preference for the non-canonical purine nucleotides XTP (xanthosine triphosphate), dITP (deoxyinosine triphosphate) and ITP. Seems to function as a house-cleaning enzyme that removes non-canonical purine nucleotides from the nucleotide pool, thus preventing their incorporation into DNA/RNA and avoiding chromosomal lesions. This chain is dITP/XTP pyrophosphatase, found in Acinetobacter baylyi (strain ATCC 33305 / BD413 / ADP1).